The chain runs to 145 residues: uncharacterized protein (145 aa).

The signal sequence occupies residues 1 to 23 (MSSSNLSSRKTRISAHFLDAAPA). The helical transmembrane segment at 123–140 (VLLLIIALVFLLFVAIFI) threads the bilayer.

The protein resides in the membrane. This is an uncharacterized protein from Archaeoglobus fulgidus (strain ATCC 49558 / DSM 4304 / JCM 9628 / NBRC 100126 / VC-16).